The sequence spans 646 residues: Kinesin-like protein klp-20 (646 aa).

Residues 6–331 (KVKVVVRCRP…LRYANRAKNI (326 aa)) enclose the Kinesin motor domain. 91–98 (GQTGTGKT) is an ATP binding site. Positions 342 to 552 (KDAQLRKFQL…LRKELLLNIA (211 aa)) form a coiled coil. The segment at 525 to 550 (LEEDHQRQVEAMLDDIRQLRKELLLN) is interaction with klp-11. The interval 623–646 (TAEHRPRTSSKKHRASIRLQQLLT) is disordered. Positions 629 to 638 (RTSSKKHRAS) are enriched in basic residues.

The protein belongs to the TRAFAC class myosin-kinesin ATPase superfamily. Kinesin family. Kinesin II subfamily. As to quaternary structure, component of the kinesin II motor complex, a heterotrimeric complex composed of kap-1, klp-11 and klp-20. Interacts (via C-terminus) with klp-11 (via C-terminus) to form a heterodimer. Furthermore, within the heterodimer, the C-termini of klp-20 and klp-11 interact to form a coiled coil (stalk) or tail domain, and this is necessary for association with kap-1, and kinesin II motor complex activity upon IFT cargo binding. Prior to cargo binding, the klp-11/klp-20 heterodimer is autoinhibited by the tail domain of the heterodimer, which folds onto the kinesin motor domain. Cargo binding to the heterodimer relieves the autoinhibition, and allows for an extended conformation of the tail domain, and function of the heterodimer.

The protein localises to the cell projection. It is found in the cilium. Its subcellular location is the cytoplasm. The protein resides in the cytoskeleton. Its function is as follows. Component of the kinesin II motor complex (composed of kap-1 and the heterodimeric motor proteins klp-11 and klp-20) which is required for intraflagellar transport (IFT). Heterodimerizes with klp-11 to form a 'processive' molecular motor upon IFT cargo binding, which, within the kinesin II motor complex, binds to and moves along microtubules in a unidirectional manner (without dissociation of the heterodimer), and in turn, is responsible for the IFT of cargo. Specifically, the kinesin II motor complex, together with the kinesin motor protein osm-3 moves along microtubules and is required for anterograde IFT along the middle segment of the sensory neuron cilia. In particular, the kinesin II motor complex delivers specific ciliary cargo proteins such as che-3 which are related to motility to ciliary tips. This is likely mediated by IFT complexes A and B. This is Kinesin-like protein klp-20 from Caenorhabditis elegans.